Reading from the N-terminus, the 303-residue chain is MFYGFDIGGTKIALGVFDSTRRLQWEKRVPTPHTSYSAFLDAVCELVAEADLRFGVKGAVGIGIPGMPETEDGTLYAANVPAASGKPLRADLSARLERDVRLDNDANCFALSEAWDDEFTQYPLVMGLILGTGVGGGLVLNGKPITGQSYITGEFGHMRLPVDALTLMGFDFPLRRCGCGQMGCIENYLSGRGFAWLYQHYYHQSLQAPEIIALWEQGDKQAHAHVERYLDLLAVCLGNILTIVDPCLLVIGGGLSNFTAITTQLSERLPRHLLPVARVPRIERARHGDAGGMRGAAFLHLTD.

ATP is bound by residues 4 to 11 (GFDIGGTK) and 133 to 140 (GVGGGLVL). Positions 157, 177, 179, and 184 each coordinate Zn(2+).

The protein belongs to the ROK (NagC/XylR) family. NagK subfamily.

It catalyses the reaction N-acetyl-D-glucosamine + ATP = N-acetyl-D-glucosamine 6-phosphate + ADP + H(+). The protein operates within cell wall biogenesis; peptidoglycan recycling. Its function is as follows. Catalyzes the phosphorylation of N-acetyl-D-glucosamine (GlcNAc) derived from cell-wall degradation, yielding GlcNAc-6-P. In Salmonella arizonae (strain ATCC BAA-731 / CDC346-86 / RSK2980), this protein is N-acetyl-D-glucosamine kinase.